Consider the following 38-residue polypeptide: Large ribosomal subunit protein bL36 (38 aa).

It belongs to the bacterial ribosomal protein bL36 family.

The sequence is that of Large ribosomal subunit protein bL36 from Cellvibrio japonicus (strain Ueda107) (Pseudomonas fluorescens subsp. cellulosa).